We begin with the raw amino-acid sequence, 266 residues long: Tryptophan synthase alpha chain (266 aa).

Catalysis depends on proton acceptor residues glutamate 49 and aspartate 60.

This sequence belongs to the TrpA family. In terms of assembly, tetramer of two alpha and two beta chains.

The enzyme catalyses (1S,2R)-1-C-(indol-3-yl)glycerol 3-phosphate + L-serine = D-glyceraldehyde 3-phosphate + L-tryptophan + H2O. It functions in the pathway amino-acid biosynthesis; L-tryptophan biosynthesis; L-tryptophan from chorismate: step 5/5. In terms of biological role, the alpha subunit is responsible for the aldol cleavage of indoleglycerol phosphate to indole and glyceraldehyde 3-phosphate. This chain is Tryptophan synthase alpha chain, found in Thioalkalivibrio sulfidiphilus (strain HL-EbGR7).